Consider the following 517-residue polypeptide: Cytochrome P450 78A5 (517 aa).

Residues 20–40 (AFASVSLIIATVAFLLSPGGL) form a helical membrane-spanning segment. Cys459 serves as a coordination point for heme.

This sequence belongs to the cytochrome P450 family. Heme is required as a cofactor. In terms of tissue distribution, expressed in the periphery of the shoot apical meristem and inflorescence meristem, on the adaxial sides of developing floral organs and in developing ovules in the region where the integuments emerge.

It is found in the membrane. In terms of biological role, plays a role in regulating directional growth at the meristem/organ boundary. Is required for the promotion of leaf and floral organ growth and for the prolongation of the plastochron. Promotes organ growth in a non-cell-autonomous manner and may generate a mobile growth signal distinct from the classical phytohormones that prevents premature arrest of proliferation, until the correct primordium size has been reached. Functions probably in association with CYP78A7 in regulating relative growth of the shoot apical meristem and plant organs. Is required locally in developing ovules to stimulates cell proliferation and promote seed growth. The chain is Cytochrome P450 78A5 (CYP78A5) from Arabidopsis thaliana (Mouse-ear cress).